A 167-amino-acid polypeptide reads, in one-letter code: Minor fimbrial protein PrsF (167 aa).

Positions 1-18 (MIRLSLFISLLLTSVAVL) are cleaved as a signal peptide.

The protein localises to the secreted. Its subcellular location is the fimbrium. Functionally, fimbriae (also called pili), polar filaments radiating from the surface of the bacterium to a length of 0.5-1.5 micrometers and numbering 100-300 per cell, enable bacteria to colonize the epithelium of specific host organs. This chain is Minor fimbrial protein PrsF (prsF), found in Escherichia coli.